We begin with the raw amino-acid sequence, 81 residues long: Neuronatin (81 aa).

Belongs to the neuronatin family.

In terms of biological role, may participate in the maintenance of segment identity in the hindbrain and pituitary development, and maturation or maintenance of the overall structure of the nervous system. May function as a regulatory subunit of ion channels. This chain is Neuronatin (NNAT), found in Mesocricetus auratus (Golden hamster).